Reading from the N-terminus, the 122-residue chain is Large ribosomal subunit protein bL12 (122 aa).

The protein belongs to the bacterial ribosomal protein bL12 family. Homodimer. Part of the ribosomal stalk of the 50S ribosomal subunit. Forms a multimeric L10(L12)X complex, where L10 forms an elongated spine to which 2 to 4 L12 dimers bind in a sequential fashion. Binds GTP-bound translation factors.

Forms part of the ribosomal stalk which helps the ribosome interact with GTP-bound translation factors. Is thus essential for accurate translation. The chain is Large ribosomal subunit protein bL12 from Actinobacillus succinogenes (strain ATCC 55618 / DSM 22257 / CCUG 43843 / 130Z).